The following is a 645-amino-acid chain: Acetyl-coenzyme A synthetase (645 aa).

Residues 190–193 and Thr-308 each bind CoA; that span reads RGGR. Residues 384–386, 408–413, Asp-497, and Arg-512 each bind ATP; these read GEP and DTWWQT. Ser-520 serves as a coordination point for CoA. Residue Arg-523 participates in ATP binding. Mg(2+) is bound by residues Val-534, His-536, and Val-539. Lys-606 is subject to N6-acetyllysine.

It belongs to the ATP-dependent AMP-binding enzyme family. Mg(2+) serves as cofactor. Post-translationally, acetylated. Deacetylation by the SIR2-homolog deacetylase activates the enzyme.

It catalyses the reaction acetate + ATP + CoA = acetyl-CoA + AMP + diphosphate. Its function is as follows. Catalyzes the conversion of acetate into acetyl-CoA (AcCoA), an essential intermediate at the junction of anabolic and catabolic pathways. AcsA undergoes a two-step reaction. In the first half reaction, AcsA combines acetate with ATP to form acetyl-adenylate (AcAMP) intermediate. In the second half reaction, it can then transfer the acetyl group from AcAMP to the sulfhydryl group of CoA, forming the product AcCoA. In Alkalilimnicola ehrlichii (strain ATCC BAA-1101 / DSM 17681 / MLHE-1), this protein is Acetyl-coenzyme A synthetase.